The chain runs to 691 residues: Lipase 2 (691 aa).

A signal peptide spans 1-37; sequence MLRGQEERKYSIRKYSIGVVSVLAATMFVVTSHEAQA. Residues 34 to 267 form a disordered region; sequence EAQASEKIPT…KPTDKNTDNK (234 aa). Residues 38 to 296 constitute a propeptide that is removed on maturation; sequence SEKIPTTNAA…ADAKKVRPLK (259 aa). Polar residues predominate over residues 41–72; the sequence is IPTTNAAAQKETLNQPGEQGNAITSHQMQSGK. A compositionally biased stretch (basic and acidic residues) spans 73-82; it reads QLDDMHKENG. Composition is skewed to polar residues over residues 94–115, 125–135, 142–172, and 186–196; these read LQSS…NDNQ, SKQSHQNNATN, DQIQ…QPSI, and PTSTTPPSNDK. 2 stretches are compositionally biased toward basic and acidic residues: residues 197-214 and 258-267; these read TAPK…KHPN and KPTDKNTDNK. S413 acts as the Nucleophile in catalysis. G580 is a binding site for Ca(2+). D604 serves as the catalytic Charge relay system. D645 is a binding site for Ca(2+). H646 functions as the Charge relay system in the catalytic mechanism. Ca(2+) is bound by residues D648, D653, and D656.

The protein belongs to the AB hydrolase superfamily. Lipase family.

Its subcellular location is the secreted. It catalyses the reaction a triacylglycerol + H2O = a diacylglycerol + a fatty acid + H(+). In Staphylococcus aureus (strain MRSA252), this protein is Lipase 2 (lip2).